The following is an 87-amino-acid chain: Large ribosomal subunit protein bL27 (87 aa).

A disordered region spans residues Met1–Arg25. The segment covering Ala7 to Gln19 has biased composition (polar residues).

This sequence belongs to the bacterial ribosomal protein bL27 family.

In Rhodococcus opacus (strain B4), this protein is Large ribosomal subunit protein bL27.